The sequence spans 300 residues: Type 1 fimbrin D-mannose specific adhesin (300 aa).

The signal sequence occupies residues 1–21; sequence MKRVITLFAVLLMGWSVNAWS.

The protein belongs to the fimbrial protein family.

The protein localises to the fimbrium. Its function is as follows. Involved in regulation of length and mediation of adhesion of type 1 fimbriae (but not necessary for the production of fimbriae). Adhesin responsible for the binding to D-mannose. It is laterally positioned at intervals in the structure of the type 1 fimbriae. In order to integrate FimH in the fimbriae FimF and FimG are needed. The polypeptide is Type 1 fimbrin D-mannose specific adhesin (fimH) (Escherichia coli (strain K12)).